We begin with the raw amino-acid sequence, 378 residues long: Histidine decarboxylase (378 aa).

Residue H120 participates in substrate binding. At K233 the chain carries N6-(pyridoxal phosphate)lysine. S323 is a catalytic residue.

This sequence belongs to the group II decarboxylase family. As to quaternary structure, homotetramer. It depends on pyridoxal 5'-phosphate as a cofactor.

It catalyses the reaction L-histidine + H(+) = histamine + CO2. The protein is Histidine decarboxylase (hdc) of Morganella morganii (Proteus morganii).